Here is a 365-residue protein sequence, read N- to C-terminus: Aminomethyltransferase (365 aa).

This sequence belongs to the GcvT family. As to quaternary structure, the glycine cleavage system is composed of four proteins: P, T, L and H.

The enzyme catalyses N(6)-[(R)-S(8)-aminomethyldihydrolipoyl]-L-lysyl-[protein] + (6S)-5,6,7,8-tetrahydrofolate = N(6)-[(R)-dihydrolipoyl]-L-lysyl-[protein] + (6R)-5,10-methylene-5,6,7,8-tetrahydrofolate + NH4(+). Functionally, the glycine cleavage system catalyzes the degradation of glycine. This Natranaerobius thermophilus (strain ATCC BAA-1301 / DSM 18059 / JW/NM-WN-LF) protein is Aminomethyltransferase.